Reading from the N-terminus, the 450-residue chain is Serine/threonine-protein kinase-transforming protein Rmil (450 aa).

Basic and acidic residues-rich tracts occupy residues 1 to 14 (MEAVIKDLIRDQGV) and 49 to 73 (QRERKSSSSSEDRNRMKTLGRRDSS). The tract at residues 1 to 80 (MEAVIKDLIR…DSSDDWEIPD (80 aa)) is disordered. In terms of domain architecture, Protein kinase spans 83-343 (ITVGQRIGSG…PQILASIELL (261 aa)). ATP-binding positions include 89–97 (IGSGSFGTV) and Lys109. Catalysis depends on Asp202, which acts as the Proton acceptor.

Belongs to the protein kinase superfamily. TKL Ser/Thr protein kinase family. RAF subfamily.

It carries out the reaction L-seryl-[protein] + ATP = O-phospho-L-seryl-[protein] + ADP + H(+). The catalysed reaction is L-threonyl-[protein] + ATP = O-phospho-L-threonyl-[protein] + ADP + H(+). The protein is Serine/threonine-protein kinase-transforming protein Rmil (V-RMIL) of Avian rous-associated virus type 1.